Consider the following 322-residue polypeptide: MSKPVRVEPGVKMRDADKMALIPVQIIPTERDQMLRKPSWLKVKLPSSTERIDEIKQAMRSHGLHSVCEEASCPNLPECFNHGTASFMILGDICTRRCPFCDVAHGRPLPPDPEEAEKLGKTIRDMKVKYVVITSVDRDDLRDGGAQHFADCIREIREHSENNIQVEVLVPDFRGRMQVAIDILKGEAPDVFNHNLETVPRLYKAARPGANYQWSLDLLQKYKEVRPDIRTKSGLMVGLGETKEEILEVMKDLRAHDVDMLTIGQYLQPSRHHIPVARYVHPDEFEELRVAGVEMGFSHIASGPLVRSSYHADLQAAGETVR.

Residues Cys68, Cys73, Cys79, Cys94, Cys98, Cys101, and Ser309 each contribute to the [4Fe-4S] cluster site. Positions 80–298 (FNHGTASFMI…RVAGVEMGFS (219 aa)) constitute a Radical SAM core domain.

This sequence belongs to the radical SAM superfamily. Lipoyl synthase family. [4Fe-4S] cluster is required as a cofactor.

Its subcellular location is the cytoplasm. It carries out the reaction [[Fe-S] cluster scaffold protein carrying a second [4Fe-4S](2+) cluster] + N(6)-octanoyl-L-lysyl-[protein] + 2 oxidized [2Fe-2S]-[ferredoxin] + 2 S-adenosyl-L-methionine + 4 H(+) = [[Fe-S] cluster scaffold protein] + N(6)-[(R)-dihydrolipoyl]-L-lysyl-[protein] + 4 Fe(3+) + 2 hydrogen sulfide + 2 5'-deoxyadenosine + 2 L-methionine + 2 reduced [2Fe-2S]-[ferredoxin]. Its pathway is protein modification; protein lipoylation via endogenous pathway; protein N(6)-(lipoyl)lysine from octanoyl-[acyl-carrier-protein]: step 2/2. Functionally, catalyzes the radical-mediated insertion of two sulfur atoms into the C-6 and C-8 positions of the octanoyl moiety bound to the lipoyl domains of lipoate-dependent enzymes, thereby converting the octanoylated domains into lipoylated derivatives. This chain is Lipoyl synthase, found in Idiomarina loihiensis (strain ATCC BAA-735 / DSM 15497 / L2-TR).